Here is a 170-residue protein sequence, read N- to C-terminus: ISSEKVVPASADPADTQRMIRYEIKQIKMFKGFEKIKDVQYIYTPFDSSLCGVKLEANSQKQYLLTGQVLSDGKVFIHLCNYIEPWEDLSLVQRESLNHHYHLNCVCQITTCYTVPCTISAPNECLWTDWLLERKLYGYQAQHYVCMKHADGTCSWYQGRLPLRKEFVDI.

The NTR domain maps to 1–105 (ISSEKVVPAS…SLNHHYHLNC (105 aa)). Involved in metalloproteinase-binding regions lie at residues 6-9 (VVPA) and 48-49 (SS). 3 cysteine pairs are disulfide-bonded: C107/C154, C112/C117, and C125/C146.

It belongs to the protease inhibitor I35 (TIMP) family.

The protein localises to the secreted. Its function is as follows. Complexes with metalloproteinases (such as collagenases) and irreversibly inactivates them by binding to their catalytic zinc cofactor. This Oryctolagus cuniculus (Rabbit) protein is Metalloproteinase inhibitor 4 (TIMP4).